A 225-amino-acid polypeptide reads, in one-letter code: Ribose-5-phosphate isomerase A (225 aa).

Substrate-binding positions include 32–35 (TGST), 85–88 (DGAD), and 98–101 (KGGG). The Proton acceptor role is filled by glutamate 107. Residue lysine 125 coordinates substrate.

This sequence belongs to the ribose 5-phosphate isomerase family. Homodimer.

It carries out the reaction aldehydo-D-ribose 5-phosphate = D-ribulose 5-phosphate. The protein operates within carbohydrate degradation; pentose phosphate pathway; D-ribose 5-phosphate from D-ribulose 5-phosphate (non-oxidative stage): step 1/1. Its function is as follows. Catalyzes the reversible conversion of ribose-5-phosphate to ribulose 5-phosphate. The protein is Ribose-5-phosphate isomerase A of Hahella chejuensis (strain KCTC 2396).